A 279-amino-acid chain; its full sequence is 5'-nucleotidase SurE (279 aa).

Asp28, Asp29, Ser59, and Asn113 together coordinate a divalent metal cation.

It belongs to the SurE nucleotidase family. It depends on a divalent metal cation as a cofactor.

Its subcellular location is the cytoplasm. The catalysed reaction is a ribonucleoside 5'-phosphate + H2O = a ribonucleoside + phosphate. Its function is as follows. Nucleotidase that shows phosphatase activity on nucleoside 5'-monophosphates. This chain is 5'-nucleotidase SurE, found in Methanospirillum hungatei JF-1 (strain ATCC 27890 / DSM 864 / NBRC 100397 / JF-1).